The chain runs to 722 residues: Probable C-mannosyltransferase DPY19L4 (722 aa).

Positions 1–34 (MAKEEGTSVEPRQRKKQRTSGSQEAKAEKIRRTP) are disordered. An N-acetylalanine modification is found at Ala2. A compositionally biased stretch (basic and acidic residues) spans 25–34 (AKAEKIRRTP). 12 helical membrane-spanning segments follow: residues 51–71 (IVIGCLAAVISGMMHVFYLSA), 160–177 (VYFYIGIVFGLQGMYVTA), 183–201 (WLMSGTWLAGMLTVAWFLI), 246–262 (FCYLLLSTSTYTFMMVW), 268–284 (VLFLQAVSLLLLDIFSV), 291–307 (YEVYKVYIFSLFLGYLL), 313–331 (ALLVSPLLSLVGAFMLVKC), 351–369 (FYLLCTLPVTLNLIVKMFV), 420–440 (LLPFYVLVLIICLLSMTQVFF), 465–485 (IIYHVIHTLLLGSLAMLMEGL), 487–507 (FIWTPYVCMLAAFGVCSPELW), and 521–541 (PMLLALILSMAVPTIIGLSLW).

It belongs to the dpy-19 family.

It localises to the membrane. Functionally, probable C-mannosyltransferase that mediates C-mannosylation of tryptophan residues on target proteins. The sequence is that of Probable C-mannosyltransferase DPY19L4 (Dpy19l4) from Mus musculus (Mouse).